The primary structure comprises 379 residues: MIGLSTYRNLPTLLTTTTVISTALRSKQLLRFTTTTSTKSRSSTSTAATTVGNSNPKSPIDEDNLEKPGTIPTKHKPFNIQTEVYNKAGIEANDDDKFLTKPTYRHEDFTEAGVYRVHVTHRPPRTIGDKISCYGTLFFRKCFDLVTGYAVPDPDKPDQYKGTRWEMTEEKWMTRCIFLESIAGVPGSVAGFVRHLHSLRMLTRDKAWIETLHDEAYNERMHLLTFIKIGKPSWFTRSIIYIGQGVFTNIFFLVYLMNPRYCHRFVGYLEEEAVRTYTHLIDELDDPNKLPDFQKLPIPNIAVQYWPELTPESSFKDLILRIRADEAKHREINHTFANLEQWQDRNPFALKIKDSDKPQPNYNLDVTRPQGWERKDLYL.

The segment covering threonine 33 to threonine 50 has biased composition (low complexity). Residues threonine 33 to lysine 76 form a disordered region. Glutamate 180, glutamate 219, and histidine 222 together coordinate Fe cation. Residues tryptophan 234–leucine 256 traverse the membrane as a helical segment. Fe cation contacts are provided by glutamate 270, glutamate 271, glutamate 326, and histidine 329.

It belongs to the alternative oxidase family. Requires Fe cation as cofactor.

The protein localises to the mitochondrion inner membrane. Catalyzes cyanide-resistant oxygen consumption. May increase respiration when the cytochrome respiratory pathway is restricted, or in response to low temperatures. This Candida albicans (Yeast) protein is Alternative oxidase 1, mitochondrial (AOX1).